Reading from the N-terminus, the 436-residue chain is T-box transcription factor TBX6 (436 aa).

A DNA-binding region (T-box) is located at residues 100–273 (LWKEFSAVGT…ANPFAKGFRE (174 aa)). The span at 274-284 (NGRNCKRERDA) shows a compositional bias: basic and acidic residues. Disordered stretches follow at residues 274–344 (NGRN…CGGP) and 360–383 (PSHLPARTPSFAEAPDPGRPAPYS). Over residues 332–344 (EAASASAPPCGGP) the composition is skewed to low complexity.

Its subcellular location is the nucleus. T-box transcription factor that plays an essential role in the determination of the fate of axial stem cells: neural vs mesodermal. Acts in part by down-regulating, a specific enhancer (N1) of SOX2, to inhibit neural development. Seems to play also an essential role in left/right axis determination and acts through effects on Notch signaling around the node as well as through an effect on the morphology and motility of the nodal cilia. The sequence is that of T-box transcription factor TBX6 (Tbx6) from Mus musculus (Mouse).